We begin with the raw amino-acid sequence, 351 residues long: MKKQIEQLSAYEPGLSPRALKENYGIKGELHKLASNENLYGPSPKVKEAIQAHLDELQYYPETGSPLIKEAISKHLNIDPARILFGAGLDEVILMISRAVLTPGDKIVTSEMTFGQYYHNAIVESANVVQVPLQNGEFDLDGILSEIDNDTKLVWLCNPNNPTGRYFTHDALRNFLERVPSHIPVIVDEAYVEFATAKDFPDTLALQQEFENAFLLRTFSKAYGLAGMRIGYVIAAKEAIEKYNIIRPPFNVGRLSEYAALAALEDQEYLASIRERNAEEREKFFELSQSDHFYPSQTNFVFVKTDKPHELYEALLNVGCITREFPNGVRITIGFPEQNAKMREVLAQFTL.

Residue lysine 221 is modified to N6-(pyridoxal phosphate)lysine.

This sequence belongs to the class-II pyridoxal-phosphate-dependent aminotransferase family. Histidinol-phosphate aminotransferase subfamily. Homodimer. It depends on pyridoxal 5'-phosphate as a cofactor.

The enzyme catalyses L-histidinol phosphate + 2-oxoglutarate = 3-(imidazol-4-yl)-2-oxopropyl phosphate + L-glutamate. The protein operates within amino-acid biosynthesis; L-histidine biosynthesis; L-histidine from 5-phospho-alpha-D-ribose 1-diphosphate: step 7/9. The polypeptide is Histidinol-phosphate aminotransferase (Staphylococcus saprophyticus subsp. saprophyticus (strain ATCC 15305 / DSM 20229 / NCIMB 8711 / NCTC 7292 / S-41)).